A 299-amino-acid chain; its full sequence is MLDKTRLRIAMQKSGRLSDDSRELLARCGIKINLQQQRLIAFAENMPIDILRVRDDDIPGLVMDGVVDLGIIGENVLEEELLNRRAQGEDPRYFTLRRLDFGGCRLSLAMQLDEAYTGPECLQNKRIATSYPHLLKQYLDRQSVNFKSCLLNGSVEVAPRAGLADAICDLVSTGATLEANGLREVEVIYRSKACLIQRDGEMPAEKQQLIDKLLTRMQGVIQARESKYIMLHAPSERLDEVIALLPGAERPTILPLAGDQSRVAMHMVSSETLFWETMEKLKSLGASSILVLPIEKMME.

The protein belongs to the ATP phosphoribosyltransferase family. Long subfamily. Equilibrium between an active dimeric form, an inactive hexameric form and higher aggregates. Interconversion between the various forms is largely reversible and is influenced by the natural substrates and inhibitors of the enzyme. Mg(2+) is required as a cofactor.

The protein localises to the cytoplasm. The catalysed reaction is 1-(5-phospho-beta-D-ribosyl)-ATP + diphosphate = 5-phospho-alpha-D-ribose 1-diphosphate + ATP. It functions in the pathway amino-acid biosynthesis; L-histidine biosynthesis; L-histidine from 5-phospho-alpha-D-ribose 1-diphosphate: step 1/9. Its activity is regulated as follows. Feedback inhibited by histidine. Its function is as follows. Catalyzes the condensation of ATP and 5-phosphoribose 1-diphosphate to form N'-(5'-phosphoribosyl)-ATP (PR-ATP). Has a crucial role in the pathway because the rate of histidine biosynthesis seems to be controlled primarily by regulation of HisG enzymatic activity. This Pectobacterium atrosepticum (strain SCRI 1043 / ATCC BAA-672) (Erwinia carotovora subsp. atroseptica) protein is ATP phosphoribosyltransferase.